Consider the following 121-residue polypeptide: Small ribosomal subunit protein uS11 (121 aa).

This sequence belongs to the universal ribosomal protein uS11 family. In terms of assembly, part of the 30S ribosomal subunit. Interacts with proteins S7 and S18. Binds to IF-3.

Functionally, located on the platform of the 30S subunit, it bridges several disparate RNA helices of the 16S rRNA. Forms part of the Shine-Dalgarno cleft in the 70S ribosome. This chain is Small ribosomal subunit protein uS11, found in Ureaplasma parvum serovar 3 (strain ATCC 27815 / 27 / NCTC 11736).